The chain runs to 251 residues: uncharacterized protein (251 aa).

Positions 1-15 are cleaved as a signal peptide; sequence MSAISSLVLIGWAMC. 2 N-linked (GlcNAc...) asparagine glycosylation sites follow: N225 and N242.

This is an uncharacterized protein from Encephalitozoon cuniculi (strain GB-M1) (Microsporidian parasite).